We begin with the raw amino-acid sequence, 654 residues long: Neuroendocrine convertase 2 (654 aa).

The signal sequence occupies residues 1–21; that stretch reads MAAATWSWLLAPFLLLHWASA. A propeptide spanning residues 22–121 is cleaved from the precursor; sequence GAGGGAGGSG…VQQPGFKRVK (100 aa). Residues 158–483 enclose the Peptidase S8 domain; the sequence is QWYLKNTGQN…FGVLDAGAMV (326 aa). Asn189 carries an N-linked (GlcNAc...) asparagine glycan. Active-site charge relay system residues include Asp196 and His237. 2 disulfide bridges follow: Cys254-Cys404 and Cys346-Cys376. Asn312 carries an N-linked (GlcNAc...) asparagine glycan. Ser412 serves as the catalytic Charge relay system. The P/Homo B domain occupies 491-627; sequence SVPPRYHCEA…SLVLHGTKEA (137 aa). A disulfide bridge links Cys498 with Cys524. An N-linked (GlcNAc...) asparagine glycan is attached at Asn544.

The protein belongs to the peptidase S8 family. Furin subfamily. Expressed in the central nervous system (CNS) and midgut endocrine cells of third instar larva (at protein level). In the CNS, expressed in the CA-LP1 and CA-LP2 neurons which innervate the corpus allatum, and in the CC-MS2 neurons which innervate the corpora cardiaca of the ring gland. Also expressed in the CC-MS1, SP3, Tv and Va neurons. Expressed in Akh-producing cells of the corpora cardiaca. In the embryo, restricted to the final stages of embryogenesis where expression is found in anterior sensory structures and in only 168 cells in the brain and ventral nerve cord. After larvae hatch, the sensory structures and most cells in the CNS turn off or substantially reduce expression. In third instar larva, expressed at higher levels in the anterior section than in the posterior section. Little expression is detected in the adult head. In the developing eye, expressed at higher levels in pale-type R7 photoreceptor cells than in yellow-type R7 cells although expression is not seen in all pale-type R7 cells. Also expressed in outer photoreceptor cells.

The protein localises to the secreted. It catalyses the reaction Release of protein hormones and neuropeptides from their precursors, generally by hydrolysis of -Lys-Arg-|- bonds.. Functionally, serine endopeptidase which is involved in the processing of hormone and other protein precursors at sites comprised of pairs of basic amino acid residues. Required during embryonic and larval development, probably by proteolytically processing peptide hormones involved in hatching, larval growth and larval molting. Required for the processing and activation of Akh which maintains normal hemolymph sugar levels. Has been shown in one study to be required for processing of sli into slit N-product and slit C-product in the embryo which is necessary for lateral transverse muscle elongation but has been shown in another study not to be required for sli cleavage. Required for larval hatching. Also required for normal larval wandering behavior which occurs prior to pupariation. Required during pupal development for head eversion, leg and wing disk extension, and abdominal differentiation. Required during eye development for R8 photoreceptor cell specification by regulating processing of ligands required for the BMP and activin signaling pathways. The chain is Neuroendocrine convertase 2 from Drosophila melanogaster (Fruit fly).